Consider the following 352-residue polypeptide: uncharacterized protein (352 aa).

Positions F285–R352 form a coiled coil.

This is an uncharacterized protein from Emericella nidulans (strain FGSC A4 / ATCC 38163 / CBS 112.46 / NRRL 194 / M139) (Aspergillus nidulans).